The following is a 445-amino-acid chain: MSTPSAPANPKVGFVSLGCPKALVDSERILTQLRMEGYDVVSTYQDADVVVVNTCGFIDSAKAESLEVIGEAIKENGKVIVTGCMGVEEGNIRDVHPSVLAVTGPQQYEQVVNAVHEVVPPKQDHNPLIDLVPPQGIKLTPRHYAYLKISEGCNHSCSFCIIPSMRGKLVSRPVGDVLDEAQRLVKSGVKELLVISQDTSAYGVDVKYRTGFWNGAPVKTRMTELCEALSTLGVWVRLHYVYPYPHVDELIPLMAAGKILPYLDIPFQHASPKVLKAMKRPAFEDKTLARIKNWREICPELIIRSTFIVGFPGETEEDFQYLLNWLTEAQLDRVGCFQYSPVEGAPANDLDLEVVPDEVKQDRWERFMAHQQEISSARLQQRIGKEIEVLIDEVDENGAVGRCFFDAPEIDGNVFIDGAGDLKPGDKVWCRVTDADEYDLWAETL.

Positions 10–120 (PKVGFVSLGC…VVNAVHEVVP (111 aa)) constitute an MTTase N-terminal domain. The [4Fe-4S] cluster site is built by cysteine 19, cysteine 55, cysteine 84, cysteine 153, cysteine 157, and cysteine 160. The Radical SAM core domain occupies 139–378 (LTPRHYAYLK…AHQQEISSAR (240 aa)). The 66-residue stretch at 380–445 (QQRIGKEIEV…DEYDLWAETL (66 aa)) folds into the TRAM domain.

This sequence belongs to the methylthiotransferase family. RimO subfamily. The cofactor is [4Fe-4S] cluster.

The protein resides in the cytoplasm. It catalyses the reaction L-aspartate(89)-[ribosomal protein uS12]-hydrogen + (sulfur carrier)-SH + AH2 + 2 S-adenosyl-L-methionine = 3-methylsulfanyl-L-aspartate(89)-[ribosomal protein uS12]-hydrogen + (sulfur carrier)-H + 5'-deoxyadenosine + L-methionine + A + S-adenosyl-L-homocysteine + 2 H(+). Functionally, catalyzes the methylthiolation of an aspartic acid residue of ribosomal protein uS12. The polypeptide is Ribosomal protein uS12 methylthiotransferase RimO (Pseudomonas fluorescens (strain ATCC BAA-477 / NRRL B-23932 / Pf-5)).